The following is a 313-amino-acid chain: Ribosomal RNA small subunit methyltransferase H (313 aa).

S-adenosyl-L-methionine is bound by residues 48 to 50 (GGH), D68, F102, D120, and Q127. Residues 290 to 313 (TATEEEIDRNPRSRSAKLRAAARK) are disordered. Basic residues predominate over residues 301–313 (RSRSAKLRAAARK).

This sequence belongs to the methyltransferase superfamily. RsmH family.

It is found in the cytoplasm. It catalyses the reaction cytidine(1402) in 16S rRNA + S-adenosyl-L-methionine = N(4)-methylcytidine(1402) in 16S rRNA + S-adenosyl-L-homocysteine + H(+). Specifically methylates the N4 position of cytidine in position 1402 (C1402) of 16S rRNA. This Koribacter versatilis (strain Ellin345) protein is Ribosomal RNA small subunit methyltransferase H.